Here is a 218-residue protein sequence, read N- to C-terminus: Pyridoxine/pyridoxamine 5'-phosphate oxidase (218 aa).

Substrate-binding positions include 14–17 (RREY) and Lys-72. Residues 67–72 (RIVLLK), 82–83 (YT), Arg-88, Lys-89, and Gln-111 each bind FMN. Substrate contacts are provided by Tyr-129, Arg-133, and Ser-137. FMN contacts are provided by residues 146–147 (QS) and Trp-191. 197-199 (RLH) lines the substrate pocket. Arg-201 serves as a coordination point for FMN.

Belongs to the pyridoxamine 5'-phosphate oxidase family. In terms of assembly, homodimer. It depends on FMN as a cofactor.

The catalysed reaction is pyridoxamine 5'-phosphate + O2 + H2O = pyridoxal 5'-phosphate + H2O2 + NH4(+). It carries out the reaction pyridoxine 5'-phosphate + O2 = pyridoxal 5'-phosphate + H2O2. Its pathway is cofactor metabolism; pyridoxal 5'-phosphate salvage; pyridoxal 5'-phosphate from pyridoxamine 5'-phosphate: step 1/1. It functions in the pathway cofactor metabolism; pyridoxal 5'-phosphate salvage; pyridoxal 5'-phosphate from pyridoxine 5'-phosphate: step 1/1. Functionally, catalyzes the oxidation of either pyridoxine 5'-phosphate (PNP) or pyridoxamine 5'-phosphate (PMP) into pyridoxal 5'-phosphate (PLP). This chain is Pyridoxine/pyridoxamine 5'-phosphate oxidase, found in Escherichia coli O127:H6 (strain E2348/69 / EPEC).